Reading from the N-terminus, the 313-residue chain is Ribosomal RNA small subunit methyltransferase H (313 aa).

S-adenosyl-L-methionine is bound by residues 35–37 (GGH), Asp-55, Phe-79, Asp-101, and Gln-108.

The protein belongs to the methyltransferase superfamily. RsmH family.

It is found in the cytoplasm. The catalysed reaction is cytidine(1402) in 16S rRNA + S-adenosyl-L-methionine = N(4)-methylcytidine(1402) in 16S rRNA + S-adenosyl-L-homocysteine + H(+). Its function is as follows. Specifically methylates the N4 position of cytidine in position 1402 (C1402) of 16S rRNA. This chain is Ribosomal RNA small subunit methyltransferase H, found in Escherichia coli O81 (strain ED1a).